The primary structure comprises 570 residues: Pre-mRNA 3'-end-processing factor FIP1 (570 aa).

Basic and acidic residues predominate over residues 1–10 (MSAEEADKTT). The segment at 1-107 (MSAEEADKTT…SDDDDDDVRV (107 aa)) is disordered. A compositionally biased stretch (acidic residues) spans 16 to 38 (AGDEEEEWLYGDEGESKETEEEE). The segment covering 56–77 (DAPTTTNNSSDSATPPTTTTTT) has biased composition (low complexity). Over residues 87–104 (APGEDEDSESDSDDDDDD) the composition is skewed to acidic residues. Position 125 is a phosphothreonine (T125). Position 247 is a phosphoserine (S247). Disordered regions lie at residues 300–328 (RRRH…VQKM), 371–400 (PNFP…YDGR), and 418–570 (GAVN…EAME). Residues 371–384 (PNFPPPTGGPPPSL) show a composition bias toward pro residues. Basic and acidic residues-rich tracts occupy residues 436–462 (YPRR…RDHS) and 476–506 (DEER…EERH). Basic residues-rich tracts occupy residues 520 to 529 (KSSRSSSRRR) and 538 to 548 (HRRHKHKKSKR). The span at 549-562 (SKEGKEPSEERSAD) shows a compositional bias: basic and acidic residues.

This sequence belongs to the FIP1 family.

It localises to the nucleus. Its function is as follows. Involved in mRNA processing. In Danio rerio (Zebrafish), this protein is Pre-mRNA 3'-end-processing factor FIP1 (fip1l1).